The primary structure comprises 382 residues: Chorismate synthase (382 aa).

Arginine 39 and arginine 45 together coordinate NADP(+). FMN is bound by residues 127–129 (RAS), 245–246 (QA), glycine 290, 305–309 (KPIPT), and arginine 331.

This sequence belongs to the chorismate synthase family. Homotetramer. Requires FMNH2 as cofactor.

The enzyme catalyses 5-O-(1-carboxyvinyl)-3-phosphoshikimate = chorismate + phosphate. Its pathway is metabolic intermediate biosynthesis; chorismate biosynthesis; chorismate from D-erythrose 4-phosphate and phosphoenolpyruvate: step 7/7. Functionally, catalyzes the anti-1,4-elimination of the C-3 phosphate and the C-6 proR hydrogen from 5-enolpyruvylshikimate-3-phosphate (EPSP) to yield chorismate, which is the branch point compound that serves as the starting substrate for the three terminal pathways of aromatic amino acid biosynthesis. This reaction introduces a second double bond into the aromatic ring system. This Desulfitobacterium hafniense (strain DSM 10664 / DCB-2) protein is Chorismate synthase.